A 1793-amino-acid polypeptide reads, in one-letter code: uncharacterized protein (1793 aa).

Disordered regions lie at residues 156-189 (ARQA…ASSQ), 204-362 (QRES…PPKV), and 407-505 (ASFG…SGAA). A compositionally biased stretch (polar residues) spans 166-175 (SSAQDSQELK). The span at 227–237 (SPKEKAQDEPS) shows a compositional bias: basic and acidic residues. The segment covering 238–247 (SKTPSPQNNP) has biased composition (polar residues). Residues 248–258 (ASSQLSRSQHS) are compositionally biased toward low complexity. The segment covering 277 to 288 (KAEEDGLSKMED) has biased composition (basic and acidic residues). Residues 289 to 307 (STTSTGALATSSSSLGFES) show a composition bias toward low complexity. A compositionally biased stretch (gly residues) spans 317–342 (AVGGEGEKISGGGGGGKGGGGGGAGD). The span at 434–450 (STTPSTNTTRTPSPTSS) shows a compositional bias: low complexity. The span at 463–476 (DTSSTEVGSGPSDS) shows a compositional bias: polar residues. Over residues 485-505 (PGTAPLTEPLPETPEAASGAA) the composition is skewed to low complexity. Residue T733 is modified to Phosphothreonine. 7 disordered regions span residues 757–809 (RSES…SKFA), 829–917 (MERG…FTDG), 1090–1147 (RDIR…GSGS), 1161–1187 (QRED…NSSS), 1229–1249 (QKTP…ATKP), 1408–1465 (TGGV…KSNS), and 1482–1567 (GELL…PLPF). 2 stretches are compositionally biased toward basic and acidic residues: residues 829–839 (MERGEVMDTSH) and 846–872 (KETE…HSEA). Over residues 1113–1123 (KGSGDSSDKGS) the composition is skewed to low complexity. Basic and acidic residues predominate over residues 1161-1174 (QREDSMDREPRESM). S1187 is modified (phosphoserine). Basic and acidic residues predominate over residues 1231-1246 (TPEKLKEEEVKEEGKA). Positions 1513 to 1528 (SQVPSSSKGSQVSGTS) are enriched in low complexity. Residues 1546-1555 (PPGPQSPEHP) are compositionally biased toward pro residues. R1774 is modified (omega-N-methylarginine).

As to expression, expressed in muscle, heart, kidney and liver but barely detectable in lung, pancreas and brain. In liver veins, expressed in hepatic vein, extrahepatic portal vein and intrahepatic portal vein.

This is an uncharacterized protein from Homo sapiens (Human).